Here is an 83-residue protein sequence, read N- to C-terminus: Small ribosomal subunit protein bS18A (83 aa).

It belongs to the bacterial ribosomal protein bS18 family. In terms of assembly, part of the 30S ribosomal subunit. Forms a tight heterodimer with protein bS6.

Binds as a heterodimer with protein bS6 to the central domain of the 16S rRNA, where it helps stabilize the platform of the 30S subunit. This Mycolicibacterium vanbaalenii (strain DSM 7251 / JCM 13017 / BCRC 16820 / KCTC 9966 / NRRL B-24157 / PYR-1) (Mycobacterium vanbaalenii) protein is Small ribosomal subunit protein bS18A.